The sequence spans 937 residues: Calsyntenin-2 (937 aa).

The first 22 residues, 1 to 22 (MKMRAITAMLLLVLSGQCGILA), serve as a signal peptide directing secretion. Residues 23 to 818 (GKVNKHKPWI…NSDHISGTPP (796 aa)) are Extracellular-facing. Cadherin domains are found at residues 32–148 (IETS…SPVF) and 149–249 (REPL…KPGW). N86 carries N-linked (GlcNAc...) asparagine glycosylation. Residues N330, N365, and N716 are each glycosylated (N-linked (GlcNAc...) asparagine). Residues 819–839 (AATVVIVMCIAALVVIVVLGI) traverse the membrane as a helical segment. Residues 840–937 (YRIHTTHQDS…LEWDPSTLPY (98 aa)) are Cytoplasmic-facing. The disordered stretch occupies residues 846–937 (HQDSSKEDEE…LEWDPSTLPY (92 aa)). Residues 865 to 874 (DNSNLNSIEG) show a composition bias toward polar residues. 2 stretches are compositionally biased toward acidic residues: residues 881 to 900 (VREE…DDLA) and 907 to 917 (ESEDSDEDEET).

It belongs to the calsyntenin family. In terms of assembly, homooligomer and heterooligomer; mediates both homophilic and heterophilc interactions with clstn1 and clstn3 paralogs via cadherin domains. As to expression, by 48 hours post-fertilization (hpf), widely expressed in the brain, with strong expression in the telencephalon and the midbrain.

Its subcellular location is the postsynaptic cell membrane. It is found in the endoplasmic reticulum membrane. The protein localises to the golgi apparatus membrane. It localises to the cell projection. The protein resides in the dendrite. Postsynaptic adhesion molecule. Promotes synapse development by acting as a cell adhesion molecule at the postsynaptic membrane, which associates with presynaptic neurexins. This chain is Calsyntenin-2 (clstn2a), found in Danio rerio (Zebrafish).